A 417-amino-acid polypeptide reads, in one-letter code: NADH-quinone oxidoreductase subunit D (417 aa).

It belongs to the complex I 49 kDa subunit family. As to quaternary structure, NDH-1 is composed of 14 different subunits. Subunits NuoB, C, D, E, F, and G constitute the peripheral sector of the complex.

Its subcellular location is the cell inner membrane. It carries out the reaction a quinone + NADH + 5 H(+)(in) = a quinol + NAD(+) + 4 H(+)(out). Its function is as follows. NDH-1 shuttles electrons from NADH, via FMN and iron-sulfur (Fe-S) centers, to quinones in the respiratory chain. The immediate electron acceptor for the enzyme in this species is believed to be ubiquinone. Couples the redox reaction to proton translocation (for every two electrons transferred, four hydrogen ions are translocated across the cytoplasmic membrane), and thus conserves the redox energy in a proton gradient. The polypeptide is NADH-quinone oxidoreductase subunit D (Francisella tularensis subsp. holarctica (strain FTNF002-00 / FTA)).